A 45-amino-acid chain; its full sequence is Large ribosomal subunit protein bL34 (45 aa).

Positions 1-45 (MTKRTFGGTSRKRKRVSGFRVRMRSHTGRRVIRTRRKRGRSRLAA) are disordered. Basic residues predominate over residues 10-45 (SRKRKRVSGFRVRMRSHTGRRVIRTRRKRGRSRLAA).

It belongs to the bacterial ribosomal protein bL34 family.

This is Large ribosomal subunit protein bL34 from Synechococcus sp. (strain CC9311).